A 92-amino-acid chain; its full sequence is Small ribosomal subunit protein bS20 (92 aa).

This sequence belongs to the bacterial ribosomal protein bS20 family.

Functionally, binds directly to 16S ribosomal RNA. In Methylacidiphilum infernorum (isolate V4) (Methylokorus infernorum (strain V4)), this protein is Small ribosomal subunit protein bS20.